Consider the following 60-residue polypeptide: Mastoparan-VT1 (60 aa).

The first 25 residues, 1–25 (MKNTILILFTAFIALLGFFGMSAEA), serve as a signal peptide directing secretion. The propeptide occupies 26–45 (LADLKADPLAGPNPDADPEA). 3 AXPX repeats span residues 31–34 (ADPL), 35–38 (AGPN), and 41–44 (ADPE). L59 carries the post-translational modification Leucine amide.

Belongs to the MCD family. Mastoparan subfamily. As to expression, expressed by the venom gland.

The protein resides in the secreted. Antimicrobial peptide with activities against Gram-negative and Gram-positive bacteria and the fungi C.albicans and C.parapsilosis. Exhibits little hemolytic activity against washed human erythrocytes. Also acts as a mast cell degranulating peptide. Its mast cell degranulation activity may be related to the activation of G-protein coupled receptors in mast cells as well as interaction with other proteins located in cell endosomal membranes in the mast cells. Functionally, antimicrobial peptide with activities against Gram-negative and Gram-positive bacteria and the fungi C.albicans and C.parapsilosis. Exhibits little hemolytic activity against washed human erythrocytes. Also acts as a mast cell degranulating peptide. The sequence is that of Mastoparan-VT1 from Vespa tropica (Greater banded hornet).